The following is a 121-amino-acid chain: Small ribosomal subunit protein uS13 (121 aa).

Residues 94-121 (GLPVRGQNTKNNSRTRKGPRRTVANKKK) form a disordered region. The segment covering 106–121 (SRTRKGPRRTVANKKK) has biased composition (basic residues).

The protein belongs to the universal ribosomal protein uS13 family. Part of the 30S ribosomal subunit. Forms a loose heterodimer with protein S19. Forms two bridges to the 50S subunit in the 70S ribosome.

Its function is as follows. Located at the top of the head of the 30S subunit, it contacts several helices of the 16S rRNA. In the 70S ribosome it contacts the 23S rRNA (bridge B1a) and protein L5 of the 50S subunit (bridge B1b), connecting the 2 subunits; these bridges are implicated in subunit movement. Contacts the tRNAs in the A and P-sites. The sequence is that of Small ribosomal subunit protein uS13 from Exiguobacterium sibiricum (strain DSM 17290 / CCUG 55495 / CIP 109462 / JCM 13490 / 255-15).